Reading from the N-terminus, the 127-residue chain is UPF0102 protein Cpha266_0037 (127 aa).

This sequence belongs to the UPF0102 family.

The sequence is that of UPF0102 protein Cpha266_0037 from Chlorobium phaeobacteroides (strain DSM 266 / SMG 266 / 2430).